We begin with the raw amino-acid sequence, 323 residues long: Peroxidase 16 (323 aa).

Positions 1–23 are cleaved as a signal peptide; that stretch reads MKNQSSFSIVALLLIFFSSSVFA. 4 cysteine pairs are disulfide-bonded: Cys34/Cys113, Cys67/Cys72, Cys119/Cys319, and Cys198/Cys230. His65 acts as the Proton acceptor in catalysis. Asp66, Val69, Gly71, Asp73, and Ser75 together coordinate Ca(2+). Pro161 contributes to the substrate binding site. Residue His191 coordinates heme b. Position 192 (Thr192) interacts with Ca(2+). 3 residues coordinate Ca(2+): Asp243, Ser246, and Asp251.

This sequence belongs to the peroxidase family. Classical plant (class III) peroxidase subfamily. It depends on heme b as a cofactor. The cofactor is Ca(2+). In terms of tissue distribution, expressed in the whole plant, but preferentially in roots and leaves.

Its subcellular location is the secreted. The enzyme catalyses 2 a phenolic donor + H2O2 = 2 a phenolic radical donor + 2 H2O. In terms of biological role, removal of H(2)O(2), oxidation of toxic reductants, biosynthesis and degradation of lignin, suberization, auxin catabolism, response to environmental stresses such as wounding, pathogen attack and oxidative stress. These functions might be dependent on each isozyme/isoform in each plant tissue. In Arabidopsis thaliana (Mouse-ear cress), this protein is Peroxidase 16 (PER16).